We begin with the raw amino-acid sequence, 598 residues long: Polypeptide N-acetylgalactosaminyltransferase 17 (598 aa).

Residues 1 to 6 (MASLRR) are Cytoplasmic-facing. A helical; Signal-anchor for type II membrane protein transmembrane segment spans residues 7-27 (VKVLLVLNLIAVAGFVIFLAK). The Lumenal segment spans residues 28-598 (CRPIAVRSGD…QRWAIKNPIK (571 aa)). The N-linked (GlcNAc...) asparagine glycan is linked to asparagine 50. 2 disulfides stabilise this stretch: cysteine 142/cysteine 373 and cysteine 364/cysteine 443. Residues 151–262 (LPQISIIFIF…AGWAEPVLSR (112 aa)) are catalytic subdomain A. Substrate is bound by residues aspartate 192 and arginine 223. Mn(2+) contacts are provided by aspartate 246, histidine 248, and histidine 378. Residues 319–381 (PIRTPAMIGC…PCSRVAHIER (63 aa)) form a catalytic subdomain B region. The substrate site is built by arginine 381 and tyrosine 386. Residues asparagine 461 and asparagine 486 are each glycosylated (N-linked (GlcNAc...) asparagine). The 130-residue stretch at 465 to 594 (AYGELRNNKA…SCTGQRWAIK (130 aa)) folds into the Ricin B-type lectin domain. Cystine bridges form between cysteine 478/cysteine 494, cysteine 526/cysteine 541, and cysteine 568/cysteine 586.

It belongs to the glycosyltransferase 2 family. GalNAc-T subfamily. It depends on Mn(2+) as a cofactor.

It localises to the golgi apparatus membrane. It catalyses the reaction L-seryl-[protein] + UDP-N-acetyl-alpha-D-galactosamine = a 3-O-[N-acetyl-alpha-D-galactosaminyl]-L-seryl-[protein] + UDP + H(+). It carries out the reaction L-threonyl-[protein] + UDP-N-acetyl-alpha-D-galactosamine = a 3-O-[N-acetyl-alpha-D-galactosaminyl]-L-threonyl-[protein] + UDP + H(+). The protein operates within protein modification; protein glycosylation. In terms of biological role, may catalyze the initial reaction in O-linked oligosaccharide biosynthesis, the transfer of an N-acetyl-D-galactosamine residue to a serine or threonine residue on the protein receptor. The protein is Polypeptide N-acetylgalactosaminyltransferase 17 of Mus musculus (Mouse).